A 93-amino-acid polypeptide reads, in one-letter code: Small ribosomal subunit protein bS18 (93 aa).

The protein belongs to the bacterial ribosomal protein bS18 family. In terms of assembly, part of the 30S ribosomal subunit. Forms a tight heterodimer with protein bS6.

Functionally, binds as a heterodimer with protein bS6 to the central domain of the 16S rRNA, where it helps stabilize the platform of the 30S subunit. This chain is Small ribosomal subunit protein bS18, found in Verminephrobacter eiseniae (strain EF01-2).